The chain runs to 70 residues: Small, acid-soluble spore protein alpha (70 aa).

The protein belongs to the alpha/beta-type SASP family.

Functionally, SASP are bound to spore DNA. They are double-stranded DNA-binding proteins that cause DNA to change to an a-like conformation. They protect the DNA backbone from chemical and enzymatic cleavage and are thus involved in dormant spore's high resistance to UV light. The chain is Small, acid-soluble spore protein alpha from Paraclostridium bifermentans (Clostridium bifermentans).